The following is a 787-amino-acid chain: LPS-assembly protein LptD (787 aa).

Positions 1-39 are cleaved as a signal peptide; that stretch reads MPRKTLLPLVPACDAAPRRKRLAAALLAVPGLVPAVSQA.

It belongs to the LptD family. Component of the lipopolysaccharide transport and assembly complex. Interacts with LptE and LptA.

It localises to the cell outer membrane. Its function is as follows. Together with LptE, is involved in the assembly of lipopolysaccharide (LPS) at the surface of the outer membrane. This is LPS-assembly protein LptD from Burkholderia thailandensis (strain ATCC 700388 / DSM 13276 / CCUG 48851 / CIP 106301 / E264).